The sequence spans 127 residues: Snaclec macrovipecetin subunit beta (127 aa).

Cystine bridges form between C4/C15, C32/C121, and C98/C113. Residues 11–122 enclose the C-type lectin domain; the sequence is YEGHCYKVFD…CSRTYKFVCK (112 aa).

Heterodimer of subunits alpha and beta; disulfide-linked. In terms of tissue distribution, expressed by the venom gland.

It localises to the secreted. Its function is as follows. Interferes with one step of hemostasis (modulation of platelet aggregation, or coagulation cascade, for example). The chain is Snaclec macrovipecetin subunit beta from Macrovipera lebetinus (Levantine viper).